Reading from the N-terminus, the 267-residue chain is Small ribosomal subunit protein uS2 (267 aa).

A disordered region spans residues 1-72 (MSGNEKEGLD…QLDEDVMPDE (72 aa)). A compositionally biased stretch (acidic residues) spans 10 to 72 (DASDSDFDPS…QLDEDVMPDE (63 aa)).

Belongs to the universal ribosomal protein uS2 family. Post-translationally, the N-terminus is blocked.

In Haloarcula marismortui (strain ATCC 43049 / DSM 3752 / JCM 8966 / VKM B-1809) (Halobacterium marismortui), this protein is Small ribosomal subunit protein uS2 (rps2).